A 332-amino-acid polypeptide reads, in one-letter code: ADP-L-glycero-D-manno-heptose-6-epimerase (332 aa).

Residues 10–11 (FI), 31–32 (DD), lysine 38, 74–78 (QGACS), and asparagine 91 contribute to the NADP(+) site. The active-site Proton acceptor is the tyrosine 138. Residue lysine 142 coordinates NADP(+). Asparagine 167 is a substrate binding site. NADP(+) is bound by residues valine 168 and lysine 176. Lysine 176 functions as the Proton acceptor in the catalytic mechanism. Substrate contacts are provided by residues arginine 178, histidine 185, 199 to 202 (FSGW), arginine 212, and tyrosine 291.

This sequence belongs to the NAD(P)-dependent epimerase/dehydratase family. HldD subfamily. As to quaternary structure, homopentamer. It depends on NADP(+) as a cofactor.

The catalysed reaction is ADP-D-glycero-beta-D-manno-heptose = ADP-L-glycero-beta-D-manno-heptose. The protein operates within nucleotide-sugar biosynthesis; ADP-L-glycero-beta-D-manno-heptose biosynthesis; ADP-L-glycero-beta-D-manno-heptose from D-glycero-beta-D-manno-heptose 7-phosphate: step 4/4. Its function is as follows. Catalyzes the interconversion between ADP-D-glycero-beta-D-manno-heptose and ADP-L-glycero-beta-D-manno-heptose via an epimerization at carbon 6 of the heptose. This chain is ADP-L-glycero-D-manno-heptose-6-epimerase, found in Bordetella avium (strain 197N).